Consider the following 148-residue polypeptide: UPF0756 membrane protein NMA2160 (148 aa).

4 helical membrane passes run 13 to 35 (LILL…LLLM), 50 to 70 (HGLN…LVSG), 80 to 100 (FLNF…WLAG), and 121 to 141 (VIGV…AGIL).

Belongs to the UPF0756 family.

It is found in the cell membrane. This is UPF0756 membrane protein NMA2160 from Neisseria meningitidis serogroup A / serotype 4A (strain DSM 15465 / Z2491).